The following is a 264-amino-acid chain: Carbonic anhydrase 7 (264 aa).

The region spanning 5 to 262 (HCWGYGQDDG…LKGRVVKASF (258 aa)) is the Alpha-carbonic anhydrase domain. Histidine 66 (proton donor/acceptor) is an active-site residue. The Zn(2+) site is built by histidine 96, histidine 98, and histidine 121. Residue 201–202 (TT) participates in substrate binding.

It belongs to the alpha-carbonic anhydrase family. It depends on Zn(2+) as a cofactor.

The protein localises to the cytoplasm. The enzyme catalyses hydrogencarbonate + H(+) = CO2 + H2O. Its function is as follows. Reversible hydration of carbon dioxide. This is Carbonic anhydrase 7 (Ca7) from Mus musculus (Mouse).